Reading from the N-terminus, the 274-residue chain is HTH-type transcriptional regulator GadX (274 aa).

An HTH araC/xylS-type domain is found at 145 to 242 (TRVCTVINNN…GMTPTEYQER (98 aa)). 2 DNA-binding regions (H-T-H motif) span residues 162 to 183 (ARIASELLMSPSLLKKKLREEE) and 209 to 232 (IKRVAVSCGYHSVSYFIYVFRNYY).

As to quaternary structure, homodimer.

Positively regulates the expression of about fifteen genes involved in acid resistance such as gadA, gadB and gadC. Depending on the conditions (growth phase and medium), can repress gadW. The chain is HTH-type transcriptional regulator GadX (gadX) from Escherichia coli O157:H7.